Here is a 314-residue protein sequence, read N- to C-terminus: Acetyl-coenzyme A carboxylase carboxyl transferase subunit beta (314 aa).

In terms of domain architecture, CoA carboxyltransferase N-terminal spans Val25–Phe294. Positions 29, 32, 48, and 51 each coordinate Zn(2+). Residues Cys29 to Cys51 form a C4-type zinc finger.

Belongs to the AccD/PCCB family. Acetyl-CoA carboxylase is a heterohexamer composed of biotin carboxyl carrier protein (AccB), biotin carboxylase (AccC) and two subunits each of ACCase subunit alpha (AccA) and ACCase subunit beta (AccD). It depends on Zn(2+) as a cofactor.

Its subcellular location is the cytoplasm. The catalysed reaction is N(6)-carboxybiotinyl-L-lysyl-[protein] + acetyl-CoA = N(6)-biotinyl-L-lysyl-[protein] + malonyl-CoA. It participates in lipid metabolism; malonyl-CoA biosynthesis; malonyl-CoA from acetyl-CoA: step 1/1. Its function is as follows. Component of the acetyl coenzyme A carboxylase (ACC) complex. Biotin carboxylase (BC) catalyzes the carboxylation of biotin on its carrier protein (BCCP) and then the CO(2) group is transferred by the transcarboxylase to acetyl-CoA to form malonyl-CoA. This chain is Acetyl-coenzyme A carboxylase carboxyl transferase subunit beta, found in Photorhabdus laumondii subsp. laumondii (strain DSM 15139 / CIP 105565 / TT01) (Photorhabdus luminescens subsp. laumondii).